The following is a 111-amino-acid chain: Cell division protein FtsB (111 aa).

Topologically, residues 1-3 (MRL) are cytoplasmic. The chain crosses the membrane as a helical span at residues 4–21 (LFLVLLVLLGLIQYPLWL). At 22–111 (GKGGWFKVWD…PGQTASAPRR (90 aa)) the chain is on the periplasmic side. Positions 31 to 62 (DLQRQVAAQHETNDGLRARNAALEAEVRDLAT) form a coiled coil. The tract at residues 88–111 (VPPGTPVPQPAPGAPGQTASAPRR) is disordered. Residues 90–100 (PGTPVPQPAPG) are compositionally biased toward pro residues. Residues 101–111 (APGQTASAPRR) show a composition bias toward low complexity.

It belongs to the FtsB family. In terms of assembly, part of a complex composed of FtsB, FtsL and FtsQ.

The protein localises to the cell inner membrane. Functionally, essential cell division protein. May link together the upstream cell division proteins, which are predominantly cytoplasmic, with the downstream cell division proteins, which are predominantly periplasmic. In Bordetella petrii (strain ATCC BAA-461 / DSM 12804 / CCUG 43448), this protein is Cell division protein FtsB.